A 247-amino-acid polypeptide reads, in one-letter code: Isoprenyl transferase (247 aa).

The active site involves Asp18. Residue Asp18 coordinates Mg(2+). Substrate contacts are provided by residues 19-22 (GNGR), Trp23, Arg31, His35, and 63-65 (SSE). Asn66 acts as the Proton acceptor in catalysis. Substrate-binding positions include Trp67, Arg69, Arg186, and 192–194 (RLS). Position 205 (Glu205) interacts with Mg(2+).

It belongs to the UPP synthase family. Homodimer. Mg(2+) serves as cofactor.

Its function is as follows. Catalyzes the condensation of isopentenyl diphosphate (IPP) with allylic pyrophosphates generating different type of terpenoids. The sequence is that of Isoprenyl transferase from Agrobacterium fabrum (strain C58 / ATCC 33970) (Agrobacterium tumefaciens (strain C58)).